Here is a 212-residue protein sequence, read N- to C-terminus: NAD(P)H-hydrate epimerase (212 aa).

The YjeF N-terminal domain occupies 11–212; it reads MRHYDSYTIN…ANDMGTYAVD (202 aa). 60–64 contacts (6S)-NADPHX; it reads NNGGD. The K(+) site is built by Asn61 and Asp123. Residues 127–133, Tyr138, and Asp156 each bind (6S)-NADPHX; that span reads GIGIDRA. Ser159 serves as a coordination point for K(+).

This sequence belongs to the NnrE/AIBP family. K(+) serves as cofactor.

The enzyme catalyses (6R)-NADHX = (6S)-NADHX. It carries out the reaction (6R)-NADPHX = (6S)-NADPHX. In terms of biological role, catalyzes the epimerization of the S- and R-forms of NAD(P)HX, a damaged form of NAD(P)H that is a result of enzymatic or heat-dependent hydration. This is a prerequisite for the S-specific NAD(P)H-hydrate dehydratase to allow the repair of both epimers of NAD(P)HX. In Limosilactobacillus reuteri (strain ATCC 55730 / SD2112) (Lactobacillus reuteri), this protein is NAD(P)H-hydrate epimerase.